Consider the following 553-residue polypeptide: Dihydroxy-acid dehydratase (553 aa).

D78 contacts Mg(2+). C119 is a [2Fe-2S] cluster binding site. Residues D120 and K121 each contribute to the Mg(2+) site. Position 121 is an N6-carboxylysine (K121). C193 lines the [2Fe-2S] cluster pocket. E441 is a binding site for Mg(2+). Residue S467 is the Proton acceptor of the active site.

The protein belongs to the IlvD/Edd family. As to quaternary structure, homodimer. It depends on [2Fe-2S] cluster as a cofactor. The cofactor is Mg(2+).

It catalyses the reaction (2R)-2,3-dihydroxy-3-methylbutanoate = 3-methyl-2-oxobutanoate + H2O. The catalysed reaction is (2R,3R)-2,3-dihydroxy-3-methylpentanoate = (S)-3-methyl-2-oxopentanoate + H2O. Its pathway is amino-acid biosynthesis; L-isoleucine biosynthesis; L-isoleucine from 2-oxobutanoate: step 3/4. It participates in amino-acid biosynthesis; L-valine biosynthesis; L-valine from pyruvate: step 3/4. Functionally, functions in the biosynthesis of branched-chain amino acids. Catalyzes the dehydration of (2R,3R)-2,3-dihydroxy-3-methylpentanoate (2,3-dihydroxy-3-methylvalerate) into 2-oxo-3-methylpentanoate (2-oxo-3-methylvalerate) and of (2R)-2,3-dihydroxy-3-methylbutanoate (2,3-dihydroxyisovalerate) into 2-oxo-3-methylbutanoate (2-oxoisovalerate), the penultimate precursor to L-isoleucine and L-valine, respectively. This is Dihydroxy-acid dehydratase from Trichlorobacter lovleyi (strain ATCC BAA-1151 / DSM 17278 / SZ) (Geobacter lovleyi).